We begin with the raw amino-acid sequence, 622 residues long: V-type ATP synthase subunit I 1 (622 aa).

8 helical membrane-spanning segments follow: residues 306-326, 328-348, 373-393, 428-448, 459-479, 485-505, 532-552, and 562-582; these read WVNL…YWEV, ISGF…ADAG, PAWC…ALVC, QMHV…LIVV, AEFG…NLIV, PLTG…FIFV, VFAD…GGAI, and PLFA…GHGL.

Belongs to the V-ATPase 116 kDa subunit family.

Its subcellular location is the cell membrane. Functionally, produces ATP from ADP in the presence of a proton gradient across the membrane. The sequence is that of V-type ATP synthase subunit I 1 (atpI1) from Treponema pallidum (strain Nichols).